Consider the following 258-residue polypeptide: Thiamine thiazole synthase (258 aa).

Residues Ser-36, 55-56 (ER), Gly-63, Val-127, and 153-155 (HVD) each bind NAD(+). The Fe cation site is built by Asp-155 and His-170. Residue Met-224 participates in NAD(+) binding. Residue Arg-234 participates in glycine binding.

The protein belongs to the THI4 family. Homooctamer; tetramer of dimers. The cofactor is Fe(2+).

The catalysed reaction is hydrogen sulfide + glycine + NAD(+) = ADP-5-ethyl-4-methylthiazole-2-carboxylate + nicotinamide + 3 H2O + H(+). It participates in cofactor biosynthesis; thiamine diphosphate biosynthesis. Involved in the biosynthesis of the thiazole moiety of thiamine. Catalyzes the conversion of NAD and glycine to adenosine diphosphate 5-(2-hydroxyethyl)-4-methylthiazole-2-carboxylate (ADT), an adenylated thiazole intermediate, using free sulfide as a source of sulfur. The polypeptide is Thiamine thiazole synthase (Desulfosudis oleivorans (strain DSM 6200 / JCM 39069 / Hxd3) (Desulfococcus oleovorans)).